A 146-amino-acid polypeptide reads, in one-letter code: uncharacterized protein (146 aa).

A disordered region spans residues 87–121; that stretch reads SRSHHSTAKSAKSALSSDSGDGSDPDPEPETFPSA. Residues 94–106 are compositionally biased toward low complexity; sequence AKSAKSALSSDSG.

This is an uncharacterized protein from Escherichia coli (strain K12).